Reading from the N-terminus, the 111-residue chain is MATSGFKHLVVVKFKEDTKVDEILKGLENLVSQIDTVKSFEWGEDKESHDMLRQGFTHAFSMTFENKDGYVAFTSHPLHVEFSAAFTAVIDKIVLLDFPVAAVKSSVVATP.

The region spanning 6–98 is the Stress-response A/B barrel domain; that stretch reads FKHLVVVKFK…VIDKIVLLDF (93 aa). Residues valine 31, isoleucine 34, aspartate 35, and valine 37 each coordinate Mg(2+).

Homodimer. The cofactor is Mg(2+).

Its function is as follows. Involved in stress response. This chain is Stress-response A/B barrel domain-containing protein At5g22580, found in Arabidopsis thaliana (Mouse-ear cress).